Reading from the N-terminus, the 86-residue chain is Putative membrane protein insertion efficiency factor (86 aa).

Belongs to the UPF0161 family.

It is found in the cell inner membrane. In terms of biological role, could be involved in insertion of integral membrane proteins into the membrane. This chain is Putative membrane protein insertion efficiency factor, found in Histophilus somni (strain 129Pt) (Haemophilus somnus).